The primary structure comprises 861 residues: Transcription factor opdJ (861 aa).

Positions 11-37 form a DNA-binding region, zn(2)-C6 fungal-type; it reads CSHCSKAKARCDRKVPCSRCVSKQLVC.

The protein resides in the nucleus. In terms of biological role, transcription factor that positively regulates the gene cluster that mediates the biosynthesis of oxopyrrolidines, polyketide-amino acid hybrid compounds with feature structures of tetramic acid. In Penicillium oxalicum (strain 114-2 / CGMCC 5302) (Penicillium decumbens), this protein is Transcription factor opdJ.